The sequence spans 150 residues: Small ribosomal subunit protein uS11y (150 aa).

Ser19 bears the Phosphoserine mark.

Belongs to the universal ribosomal protein uS11 family.

It is found in the cytoplasm. This is Small ribosomal subunit protein uS11y (RPS14B) from Arabidopsis thaliana (Mouse-ear cress).